We begin with the raw amino-acid sequence, 596 residues long: Elongation factor 4 (596 aa).

Residues 2–184 (SHIRNFSIIA…RLVHTIPAPE (183 aa)) form the tr-type G domain. Residues 14-19 (DHGKST) and 131-134 (NKMD) each bind GTP.

The protein belongs to the TRAFAC class translation factor GTPase superfamily. Classic translation factor GTPase family. LepA subfamily.

The protein localises to the cell inner membrane. It catalyses the reaction GTP + H2O = GDP + phosphate + H(+). Its function is as follows. Required for accurate and efficient protein synthesis under certain stress conditions. May act as a fidelity factor of the translation reaction, by catalyzing a one-codon backward translocation of tRNAs on improperly translocated ribosomes. Back-translocation proceeds from a post-translocation (POST) complex to a pre-translocation (PRE) complex, thus giving elongation factor G a second chance to translocate the tRNAs correctly. Binds to ribosomes in a GTP-dependent manner. The protein is Elongation factor 4 of Pseudomonas putida (strain GB-1).